The primary structure comprises 428 residues: Something about silencing protein 10 (428 aa).

Positions Met1–Ser93 are disordered. Acidic residues-rich tracts occupy residues Gln15–Ile24 and Ser46–Asp62. Phosphoserine is present on residues Ser152, Ser323, Ser324, and Ser337. The segment at Gly317–Gly386 is disordered. Over residues Ser324 to Glu336 the composition is skewed to acidic residues. The span at Glu344–Glu353 shows a compositional bias: acidic residues. The span at Thr370–Gly386 shows a compositional bias: basic residues.

Belongs to the SAS10 family.

It localises to the nucleus. Functionally, essential for gene silencing: has a role in the structure of silenced chromatin. May be involved in gene regulation during development. Binds RNA. The sequence is that of Something about silencing protein 10 from Drosophila melanogaster (Fruit fly).